The primary structure comprises 465 residues: UDP-glucose:undecaprenyl-phosphate glucose-1-phosphate transferase (465 aa).

5 consecutive transmembrane segments (helical) span residues 23 to 43, 46 to 66, 82 to 102, 105 to 125, and 280 to 300; these read FSDILIIFLGIYFSCFINDYF, LHYVLMALVALVVFQMIGGIT, ILILKNWSLSFLLTLGFVTLF, FDLTFRTFIFWYLAVCAGFVV, and IIVSSLILILISPILLVIATA.

The protein belongs to the bacterial sugar transferase family.

The protein resides in the cell inner membrane. The catalysed reaction is di-trans,octa-cis-undecaprenyl phosphate + UDP-alpha-D-glucose = alpha-D-glucosyl di-trans,octa-cis-undecaprenyl diphosphate + UMP. Its pathway is capsule biogenesis; capsule polysaccharide biosynthesis. Functionally, is likely the initiating enzyme for the K2 capsular polysaccharide synthesis. Catalyzes the transfer of the glucose-1-phosphate moiety from UDP-Glc onto the carrier lipid undecaprenyl phosphate (C55-P), forming a phosphoanhydride bond yielding to glucosyl-pyrophosphoryl-undecaprenol (Glc-PP-C55). This chain is UDP-glucose:undecaprenyl-phosphate glucose-1-phosphate transferase, found in Klebsiella pneumoniae.